The sequence spans 161 residues: Allophycocyanin beta chain (161 aa).

Position 71 is an N4-methylasparagine (N71). C81 contributes to the (2R,3E)-phycocyanobilin binding site.

The protein belongs to the phycobiliprotein family. In terms of assembly, heterodimer of an alpha and a beta chain. In terms of processing, contains one covalently linked phycocyanobilin chromophore.

Its subcellular location is the cellular thylakoid membrane. Its function is as follows. Light-harvesting photosynthetic bile pigment-protein from the phycobiliprotein complex. Allophycocyanin has a maximum absorption at approximately 650 nanometers. This chain is Allophycocyanin beta chain (apcB), found in Anabaena cylindrica.